Consider the following 887-residue polypeptide: MAKSSADDEELRRACEAAIEGTKQSIVMSIRVAKSRGVWGKSGKLGRQMAKPRVLALSVKSKGPRKKAFLRVMKYSSGGVLEPAKMYKLKHLSKVEVITNDPSGCTFTLGFDNLRSQSVAPPQWTMRNTDDRNRLLVCILNICKDVLGRLPKVVGIDIVEMALWAKDNTPVVTTQRSTEDGEPVAESVTESDLKVTVEKELVSQAEEEDMEALLGTYVMGIGEAEAFSERLKRELQALEAANVHAILESEPLVDEVLNGLEAATNIVDDMDEWLGIFNIKLRHMREDIESIETRNNKLEMQSVNNKALIEELDKVIERLRVPSEYAASLTGGSFDEADMLQNIEACEWLAKALRGLEVPNLDPIYANMRAVKEKRAELEKLKATFVRRASEFLRNYFASLVDFMVSDKSYFSQRGQLKRPDHADLRYKCRTYARLLQHLKGLDKNCLGPLRKAYCSSLNLLLRREAREFANELRASTKVSRNPTVWLEGSTGSSQNANTDTSAVSDAYAKMLTIFIPLLVDESSFFAHFMCFEVPALAPPGGAGNDKKSQSNNDDGNDDDDLGIMDIDETDKKPGKNSPDLTALNESLQDLLDGIQEDFYAVVDWAYKIDPLRCISMHGITERYLSGQKADAAGFVRLLLGDLESRVSMQFSRFVDEACHQIERNERNVRQMGVLPYIPRFAALATRMEQYIQGQSRDLVDQAYTKFVSIMFVTLEKIAQQDPKYADILLLENYAAFQNSLYDLANVVPTLAKFYHQASEAYEQACTRHISMIIYYQFERLFQFAKKIEDFMYTITPEEIPFQLGLSKVELRKMLKSSLSGVDKSIAAMYKKLQKNLASEELLPSLWDKCKKEFLDKYESFVQLVAKVYPSENVPGVTEMRGLLASM.

Coiled coils occupy residues 221–248 (IGEA…AILE) and 281–301 (LRHM…LEMQ). The segment at 542–581 (GAGNDKKSQSNNDDGNDDDDLGIMDIDETDKKPGKNSPDL) is disordered. Over residues 555 to 569 (DGNDDDDLGIMDIDE) the composition is skewed to acidic residues.

It belongs to the SEC3 family. As to quaternary structure, the exocyst complex is composed of SEC3, SEC5, SEC6, SEC8, SEC10, EXO70A1 and EXO84B. Interacts with EXO70A1, SEC5A and ICR1, but not with ICR2. Binds to EXO70H1. Binds directly to B1L. In terms of tissue distribution, widely expressed. Preferentially expressed in tissues containing dividing and expanding cells, such as the shoot apical meristem, root tip, lateral root primordia and developing embryos.

The protein localises to the cytoplasm. It localises to the cytosol. Its subcellular location is the cell membrane. It is found in the cytoskeleton. The protein resides in the phragmoplast. The protein localises to the secreted. It localises to the extracellular exosome. Functionally, component of the exocyst complex involved in the docking of exocytic vesicles with fusion sites on the plasma membrane during regulated or polarized secretion. Involved in polarized cell growth and organ morphogenesis. During cytokinesis, involved in cell plate initiation, cell plate maturation and formation of new primary cell wall. During cytokinesis, involved in cell plate initiation, cell plate maturation and formation of new primary cell wall. The protein is Exocyst complex component SEC3A of Arabidopsis thaliana (Mouse-ear cress).